The following is a 578-amino-acid chain: Potassium-transporting ATPase potassium-binding subunit (578 aa).

A run of 10 helical transmembrane segments spans residues 3 to 23 (NAILQYSLYLIILVLLAIPLG), 65 to 85 (SFSVLAFSAVGFIFLFALNLL), 134 to 154 (GLTVQNFLSAGVGIAVLFALI), 175 to 195 (IVLYLLVPLSIVLSILLVSQG), 261 to 281 (FSNLLEMLSILLIPAALCFTF), 293 to 313 (AIFIAMFTLLIIALCIIGVSE), 397 to 417 (GLYGMIAFAIITVFIAGLMVG), 435 to 455 (AMLICLATPISILIGSALASI), 503 to 523 (IGLIMLFVRFVPMIATLAIAG), and 543 to 563 (LLFIGLLIFVVLLVGALSFFP).

This sequence belongs to the KdpA family. As to quaternary structure, the system is composed of three essential subunits: KdpA, KdpB and KdpC.

It localises to the cell membrane. Part of the high-affinity ATP-driven potassium transport (or Kdp) system, which catalyzes the hydrolysis of ATP coupled with the electrogenic transport of potassium into the cytoplasm. This subunit binds the extracellular potassium ions and delivers the ions to the membrane domain of KdpB through an intramembrane tunnel. The sequence is that of Potassium-transporting ATPase potassium-binding subunit from Clostridium perfringens (strain ATCC 13124 / DSM 756 / JCM 1290 / NCIMB 6125 / NCTC 8237 / Type A).